The chain runs to 203 residues: Shikimate kinase (203 aa).

32–37 (GAGKTA) lines the ATP pocket. Threonine 36 is a Mg(2+) binding site. Substrate is bound by residues aspartate 54, arginine 78, and glycine 100. ATP is bound at residue arginine 138. Substrate is bound at residue arginine 157.

It belongs to the shikimate kinase family. As to quaternary structure, monomer. Requires Mg(2+) as cofactor.

It is found in the cytoplasm. It catalyses the reaction shikimate + ATP = 3-phosphoshikimate + ADP + H(+). Its pathway is metabolic intermediate biosynthesis; chorismate biosynthesis; chorismate from D-erythrose 4-phosphate and phosphoenolpyruvate: step 5/7. In terms of biological role, catalyzes the specific phosphorylation of the 3-hydroxyl group of shikimic acid using ATP as a cosubstrate. In Mesorhizobium japonicum (strain LMG 29417 / CECT 9101 / MAFF 303099) (Mesorhizobium loti (strain MAFF 303099)), this protein is Shikimate kinase.